Here is an 819-residue protein sequence, read N- to C-terminus: Serine/threonine-protein phosphatase 1 regulatory subunit 10 (819 aa).

In terms of domain architecture, TFIIS N-terminal spans 73–147 (KLLNNWLTYA…NDWMAVIRSQ (75 aa)). 3 disordered regions span residues 151-204 (QPAD…KFRS), 296-391 (KIKK…RKTV), and 495-785 (SVPD…GGDM). 2 stretches are compositionally biased toward basic and acidic residues: residues 153-165 (ADKE…EDAK) and 173-190 (KTSE…EKPK). Positions 305–327 (SPTSNKASPFDSKSPTEASSLTK) are enriched in polar residues. The PP1-binding motif motif lies at 386-415 (KKRKTVSWPEESRLREYFYFELDETERVNV). A compositionally biased stretch (basic and acidic residues) spans 495–504 (SVPDTPHEPD). 2 stretches are compositionally biased toward polar residues: residues 533–543 (MDQSTESQSPD) and 560–578 (MGSS…QEIL). Residues 589–604 (KPEDLMKQPDFSEKIK) are compositionally biased toward basic and acidic residues. The span at 606–618 (LLGSLQNQNQNQG) shows a compositional bias: low complexity. Pro residues-rich tracts occupy residues 635–663 (FPPP…PGPN) and 670–695 (HGPP…PPPN). Composition is skewed to basic and acidic residues over residues 704-715 (HGGERGGMRGGD) and 758-777 (HGDH…GDHR). The C3H1-type zinc-finger motif lies at 785 to 813 (MSTRPTCRHFMMKGNCRYENNCAFYHPGI).

In terms of assembly, component of the PNUTS-PP1 complex (also named PTW/PP1 complex).

Its subcellular location is the nucleus. The protein resides in the chromosome. Substrate-recognition component of the PNUTS-PP1 protein phosphatase complex, a protein phosphatase 1 (PP1) complex that promotes RNA polymerase II transcription pause-release, allowing transcription elongation. Promoter-proximal pausing by RNA polymerase II is a transcription halt following transcription initiation but prior to elongation, which acts as a checkpoint to control that transcripts are favorably configured for transcriptional elongation. The PNUTS-PP1 complex mediates the release of RNA polymerase II from promoter-proximal region of genes by catalyzing dephosphorylation of proteins involved in transcription. In some context, PPP1R10/PNUTS also acts as an inhibitor of protein phosphatase 1 (PP1) activity by preventing access to substrates. The chain is Serine/threonine-protein phosphatase 1 regulatory subunit 10 (ppp1r10) from Xenopus laevis (African clawed frog).